We begin with the raw amino-acid sequence, 515 residues long: Organic cation/carnitine transporter 5 (515 aa).

Topologically, residues 1–43 (MADSLAPLLPTHIEEDEDTSSPLTFDKILEKSLSDFGFSQFLQ) are cytoplasmic. Residues 44–64 (IVLVGLALTFDSQQIFITVFT) form a helical membrane-spanning segment. At 65-124 (DAYPTWHCLDHTICNPATTDICKIPRSAWDWDGGFKGKSVISEFDLECSSSFLRSLPSST) the chain is on the extracellular side. The helical transmembrane segment at 125–145 (FYVGSIVGGVVLAMIPDGSLG) threads the bilayer. The Cytoplasmic segment spans residues 146 to 149 (RKQL). Residues 150 to 172 (LFFSSFAMSLTGISIFLSSNIWI) traverse the membrane as a helical segment. The Extracellular portion of the chain corresponds to 173-177 (YSFLK). Residues 178-195 (FVIGFARSQTGTYALVLI) traverse the membrane as a helical segment. 195–202 (ISERISTK) is an ATP binding site. The Cytoplasmic portion of the chain corresponds to 196–208 (SERISTKWRPRAT). A helical transmembrane segment spans residues 209–229 (MVPFTLFVLGFMSLSGIAYLV). The Extracellular segment spans residues 230 to 235 (RHASWK). The chain crosses the membrane as a helical span at residues 236 to 256 (VLYLCTSIPAGIHSIFIYFFA). The Cytoplasmic segment spans residues 257–320 (LESPRWLHLE…LFIIKWAFRR (64 aa)). A helical transmembrane segment spans residues 321 to 341 (VTLVMIIMFGLGMSYYGVPLA). Topologically, residues 342–350 (VRDIKVNIY) are extracellular. A helical membrane pass occupies residues 351–371 (MSEALNAMVELPTFVVTPILL). The Cytoplasmic segment spans residues 372 to 379 (EQFSRRSS). Residues 380–400 (VLVNCLIGGASGVLCFVMSLY) form a helical membrane-spanning segment. Topologically, residues 401 to 411 (GRTKIAFALEL) are extracellular. A helical transmembrane segment spans residues 412-432 (GSFFCARIGFNLMAIYLVELF). Residues 433-441 (PTCVRNSAT) are Cytoplasmic-facing. Residues 442 to 462 (MMLRQALVVGGACCPLIASLG) traverse the membrane as a helical segment. The Extracellular segment spans residues 463 to 467 (RNVPS). Residues 468–488 (LSFAVFGFAMSGLGLFALLLP) form a helical membrane-spanning segment. The Cytoplasmic portion of the chain corresponds to 489–515 (ETKGLSLCDTMEEQEQRDQALKTSHSC).

It belongs to the major facilitator (TC 2.A.1) superfamily. Organic cation transporter (TC 2.A.1.19) family. Mostly expressed in leaves and siliques, and, to a lower extent, in roots, stems and flowers.

The protein localises to the vacuole membrane. In terms of biological role, high affinity carnitine transporter involved in the active cellular uptake of carnitine. Also transports organic cations. In Arabidopsis thaliana (Mouse-ear cress), this protein is Organic cation/carnitine transporter 5 (OCT5).